Here is a 167-residue protein sequence, read N- to C-terminus: NADH-quinone oxidoreductase subunit B (167 aa).

The [4Fe-4S] cluster site is built by cysteine 40, cysteine 41, cysteine 105, and cysteine 134.

It belongs to the complex I 20 kDa subunit family. As to quaternary structure, NDH-1 is composed of 14 different subunits. Subunits NuoB, C, D, E, F, and G constitute the peripheral sector of the complex. It depends on [4Fe-4S] cluster as a cofactor.

The protein resides in the cell inner membrane. The enzyme catalyses a quinone + NADH + 5 H(+)(in) = a quinol + NAD(+) + 4 H(+)(out). Its function is as follows. NDH-1 shuttles electrons from NADH, via FMN and iron-sulfur (Fe-S) centers, to quinones in the respiratory chain. The immediate electron acceptor for the enzyme in this species is believed to be ubiquinone. Couples the redox reaction to proton translocation (for every two electrons transferred, four hydrogen ions are translocated across the cytoplasmic membrane), and thus conserves the redox energy in a proton gradient. The chain is NADH-quinone oxidoreductase subunit B from Campylobacter jejuni (strain RM1221).